Here is a 171-residue protein sequence, read N- to C-terminus: Crossover junction endodeoxyribonuclease RuvC (171 aa).

Residues Asp-7, Glu-74, and Asp-147 contribute to the active site. Mg(2+)-binding residues include Asp-7, Glu-74, and Asp-147.

It belongs to the RuvC family. In terms of assembly, homodimer which binds Holliday junction (HJ) DNA. The HJ becomes 2-fold symmetrical on binding to RuvC with unstacked arms; it has a different conformation from HJ DNA in complex with RuvA. In the full resolvosome a probable DNA-RuvA(4)-RuvB(12)-RuvC(2) complex forms which resolves the HJ. The cofactor is Mg(2+).

It is found in the cytoplasm. The enzyme catalyses Endonucleolytic cleavage at a junction such as a reciprocal single-stranded crossover between two homologous DNA duplexes (Holliday junction).. In terms of biological role, the RuvA-RuvB-RuvC complex processes Holliday junction (HJ) DNA during genetic recombination and DNA repair. Endonuclease that resolves HJ intermediates. Cleaves cruciform DNA by making single-stranded nicks across the HJ at symmetrical positions within the homologous arms, yielding a 5'-phosphate and a 3'-hydroxyl group; requires a central core of homology in the junction. The consensus cleavage sequence is 5'-(A/T)TT(C/G)-3'. Cleavage occurs on the 3'-side of the TT dinucleotide at the point of strand exchange. HJ branch migration catalyzed by RuvA-RuvB allows RuvC to scan DNA until it finds its consensus sequence, where it cleaves and resolves the cruciform DNA. In Acidobacterium capsulatum (strain ATCC 51196 / DSM 11244 / BCRC 80197 / JCM 7670 / NBRC 15755 / NCIMB 13165 / 161), this protein is Crossover junction endodeoxyribonuclease RuvC.